A 470-amino-acid polypeptide reads, in one-letter code: Uronate isomerase (470 aa).

The protein belongs to the metallo-dependent hydrolases superfamily. Uronate isomerase family.

The enzyme catalyses D-glucuronate = D-fructuronate. It catalyses the reaction aldehydo-D-galacturonate = keto-D-tagaturonate. The protein operates within carbohydrate metabolism; pentose and glucuronate interconversion. The polypeptide is Uronate isomerase (Vibrio vulnificus (strain YJ016)).